A 94-amino-acid chain; its full sequence is uncharacterized protein (94 aa).

Positions 13–67 constitute an HTH cro/C1-type domain; the sequence is IQESLDELNVSLREFARAMEIAPSTASRLLTGKAALTPEMAIKLSVVIGSSPQMW. Positions 24 to 43 form a DNA-binding region, H-T-H motif; sequence LREFARAMEIAPSTASRLLT.

Belongs to the VapA/VapI family.

This is an uncharacterized protein from Escherichia coli (strain K12).